A 206-amino-acid polypeptide reads, in one-letter code: Cytochrome c oxidase assembly protein CtaG (206 aa).

The Cytoplasmic segment spans residues 1 to 17; sequence MPEVQPSALPKPAPRLG. A helical; Signal-anchor for type II membrane protein membrane pass occupies residues 18–40; it reads RDAAVASICGFVVALMVGASFAA. Residues 41–206 are Periplasmic-facing; that stretch reads VPFYDWFCRT…GEPDQRKGNL (166 aa).

The protein belongs to the COX11/CtaG family.

It is found in the cell inner membrane. Exerts its effect at some terminal stage of cytochrome c oxidase synthesis, probably by being involved in the insertion of the copper B into subunit I. This chain is Cytochrome c oxidase assembly protein CtaG, found in Rhodopseudomonas palustris (strain BisB5).